Here is a 494-residue protein sequence, read N- to C-terminus: 4-trimethylaminobutyraldehyde dehydrogenase (494 aa).

Ser2 bears the N-acetylserine; in 4-trimethylaminobutyraldehyde dehydrogenase, N-terminally processed mark. Lys30 bears the N6-acetyllysine; alternate mark. Lys30 carries the post-translational modification N6-succinyllysine; alternate. Lys59 bears the N6-succinyllysine mark. NAD(+)-binding positions include Lys180 and 232 to 236; that span reads GSVPT. Glu254 (proton acceptor) is an active-site residue. Cys288 serves as the catalytic Nucleophile. Residue Lys298 is modified to N6-acetyllysine. Lys303 bears the N6-acetyllysine; alternate mark. An N6-succinyllysine; alternate modification is found at Lys303. Lys344 is subject to N6-acetyllysine. Glu391 is an NAD(+) binding site.

This sequence belongs to the aldehyde dehydrogenase family. In terms of assembly, homotetramer. In terms of tissue distribution, detected in brain (at protein level). High expression in adult liver, skeletal muscle, and kidney. Low levels in heart, pancreas, lung and brain. Expressed in all regions of the brain. Expression levels are variable in the different brain areas, with the highest levels in the spinal cord and the lowest in the occipital pole.

It localises to the cytoplasm. It is found in the cytosol. It carries out the reaction 4-(trimethylamino)butanal + NAD(+) + H2O = 4-(trimethylamino)butanoate + NADH + 2 H(+). The enzyme catalyses an aldehyde + NAD(+) + H2O = a carboxylate + NADH + 2 H(+). It catalyses the reaction 4-aminobutanal + NAD(+) + H2O = 4-aminobutanoate + NADH + 2 H(+). The catalysed reaction is formaldehyde + NAD(+) + H2O = formate + NADH + 2 H(+). It carries out the reaction acetaldehyde + NAD(+) + H2O = acetate + NADH + 2 H(+). The enzyme catalyses imidazole-4-acetaldehyde + NAD(+) + H2O = imidazole-4-acetate + NADH + 2 H(+). It catalyses the reaction acrolein + NAD(+) + H2O = acrylate + NADH + 2 H(+). The catalysed reaction is (5-hydroxyindol-3-yl)acetaldehyde + NAD(+) + H2O = (5-hydroxyindol-3-yl)acetate + NADH + 2 H(+). It carries out the reaction 3,4-dihydroxyphenylacetaldehyde + NAD(+) + H2O = 3,4-dihydroxyphenylacetate + NADH + 2 H(+). The enzyme catalyses spermine monoaldehyde + NAD(+) + H2O = N-(2-carboxyethyl)spermidine + NADH + 2 H(+). It catalyses the reaction propanal + NAD(+) + H2O = propanoate + NADH + 2 H(+). The catalysed reaction is butanal + NAD(+) + H2O = butanoate + NADH + 2 H(+). It carries out the reaction pentanal + NAD(+) + H2O = pentanoate + NADH + 2 H(+). The enzyme catalyses hexanal + NAD(+) + H2O = hexanoate + NADH + 2 H(+). It participates in amine and polyamine biosynthesis; carnitine biosynthesis. Its function is as follows. Converts gamma-trimethylaminobutyraldehyde into gamma-butyrobetaine with high efficiency (in vitro). Can catalyze the irreversible oxidation of a broad range of aldehydes to the corresponding acids in an NAD-dependent reaction, but with low efficiency. Catalyzes the oxidation of aldehydes arising from biogenic amines and polyamines. The chain is 4-trimethylaminobutyraldehyde dehydrogenase (ALDH9A1) from Homo sapiens (Human).